Reading from the N-terminus, the 39-residue chain is Beta-theraphotoxin-Cm2a (39 aa).

Cystine bridges form between Cys7-Cys21, Cys14-Cys26, and Cys20-Cys33. Phe39 carries the phenylalanine amide modification.

Expressed by the venom gland.

Its subcellular location is the secreted. Functionally, inhibits mammalian voltage-gated sodium channel subtypes Nav1.5/SCN5A and Nav1.8/SCN10A by shifting the voltage dependence of channel activation to more depolarized potentials and by blocking the inward component of the sodium current. In vivo, this toxin causes erect, elevated tail, initial partial ataxia, followed by recovery over approximately 1 hour after injection and the progressive development of shaking. Although paralysis subsides, the body tremors never cease and persist until the end of the experiment. The sequence is that of Beta-theraphotoxin-Cm2a from Ceratogyrus marshalli (Straighthorned baboon tarantula).